The primary structure comprises 304 residues: Glycine--tRNA ligase alpha subunit (304 aa).

It belongs to the class-II aminoacyl-tRNA synthetase family. In terms of assembly, tetramer of two alpha and two beta subunits.

The protein resides in the cytoplasm. It catalyses the reaction tRNA(Gly) + glycine + ATP = glycyl-tRNA(Gly) + AMP + diphosphate. The protein is Glycine--tRNA ligase alpha subunit of Yersinia enterocolitica serotype O:8 / biotype 1B (strain NCTC 13174 / 8081).